We begin with the raw amino-acid sequence, 381 residues long: 1-deoxy-D-xylulose 5-phosphate reductoisomerase (381 aa).

NADPH contacts are provided by Thr11, Gly12, Ser13, Ile14, Asn37, and Asn121. Lys122 is a 1-deoxy-D-xylulose 5-phosphate binding site. Glu123 lines the NADPH pocket. Asp147 lines the Mn(2+) pocket. Positions 148, 149, 173, and 196 each coordinate 1-deoxy-D-xylulose 5-phosphate. Glu149 is a Mn(2+) binding site. Residue Gly202 participates in NADPH binding. Residues Ser209, Asn214, Lys215, and Glu218 each coordinate 1-deoxy-D-xylulose 5-phosphate. Mn(2+) is bound at residue Glu218.

This sequence belongs to the DXR family. Mg(2+) is required as a cofactor. Requires Mn(2+) as cofactor.

It carries out the reaction 2-C-methyl-D-erythritol 4-phosphate + NADP(+) = 1-deoxy-D-xylulose 5-phosphate + NADPH + H(+). It functions in the pathway isoprenoid biosynthesis; isopentenyl diphosphate biosynthesis via DXP pathway; isopentenyl diphosphate from 1-deoxy-D-xylulose 5-phosphate: step 1/6. In terms of biological role, catalyzes the NADPH-dependent rearrangement and reduction of 1-deoxy-D-xylulose-5-phosphate (DXP) to 2-C-methyl-D-erythritol 4-phosphate (MEP). This is 1-deoxy-D-xylulose 5-phosphate reductoisomerase from Ruminiclostridium cellulolyticum (strain ATCC 35319 / DSM 5812 / JCM 6584 / H10) (Clostridium cellulolyticum).